Reading from the N-terminus, the 61-residue chain is UPF0391 membrane protein Aave_0978 (61 aa).

Transmembrane regions (helical) follow at residues 5–25 (AIIF…GVAA) and 33–53 (ILFF…VLGV).

Belongs to the UPF0391 family.

Its subcellular location is the cell membrane. The polypeptide is UPF0391 membrane protein Aave_0978 (Paracidovorax citrulli (strain AAC00-1) (Acidovorax citrulli)).